Here is a 491-residue protein sequence, read N- to C-terminus: Hydroxymethylglutaryl-CoA synthase (491 aa).

Catalysis depends on E127, which acts as the Proton donor/acceptor. Residue C159 is the Acyl-thioester intermediate of the active site. C159, T201, and S250 together coordinate (3S)-3-hydroxy-3-methylglutaryl-CoA. Residue S276 is modified to Phosphoserine. H296 acts as the Proton donor/acceptor in catalysis. The (3S)-3-hydroxy-3-methylglutaryl-CoA site is built by H296, K305, N371, and S405.

This sequence belongs to the thiolase-like superfamily. HMG-CoA synthase family.

The enzyme catalyses acetoacetyl-CoA + acetyl-CoA + H2O = (3S)-3-hydroxy-3-methylglutaryl-CoA + CoA + H(+). The protein operates within metabolic intermediate biosynthesis; (R)-mevalonate biosynthesis; (R)-mevalonate from acetyl-CoA: step 2/3. Its function is as follows. Hydroxymethylglutaryl-CoA synthase; part of the first module of ergosterol biosynthesis pathway that includes the early steps of the pathway, conserved across all eukaryotes, and which results in the formation of mevalonate from acetyl-coenzyme A (acetyl-CoA). ERG13 condenses acetyl-CoA with acetoacetyl-CoA to form hydroxymethylglutaryl-CoA (HMG-CoA). The first module starts with the action of the cytosolic acetyl-CoA acetyltransferase ERG10 that catalyzes the formation of acetoacetyl-CoA. The hydroxymethylglutaryl-CoA synthase ERG13 then condenses acetyl-CoA with acetoacetyl-CoA to form HMG-CoA. The rate-limiting step of the early module is the reduction to mevalonate by the 3-hydroxy-3-methylglutaryl-coenzyme A (HMG-CoA) reductases HMG1 and HMG2 which are derived from a single ancestral HMGR gene by gene duplication. The chain is Hydroxymethylglutaryl-CoA synthase from Saccharomyces cerevisiae (strain ATCC 204508 / S288c) (Baker's yeast).